The chain runs to 635 residues: Threonine--tRNA ligase (635 aa).

The region spanning 1-61 (MIVITLPDGS…EGDARLAIVT (61 aa)) is the TGS domain. The tract at residues 242 to 533 (DHRKLGRELD…LIEQHAGALP (292 aa)) is catalytic. Positions 333, 384, and 510 each coordinate Zn(2+).

Belongs to the class-II aminoacyl-tRNA synthetase family. In terms of assembly, homodimer. Zn(2+) is required as a cofactor.

Its subcellular location is the cytoplasm. It catalyses the reaction tRNA(Thr) + L-threonine + ATP = L-threonyl-tRNA(Thr) + AMP + diphosphate + H(+). Functionally, catalyzes the attachment of threonine to tRNA(Thr) in a two-step reaction: L-threonine is first activated by ATP to form Thr-AMP and then transferred to the acceptor end of tRNA(Thr). Also edits incorrectly charged L-seryl-tRNA(Thr). In Methylibium petroleiphilum (strain ATCC BAA-1232 / LMG 22953 / PM1), this protein is Threonine--tRNA ligase.